A 188-amino-acid chain; its full sequence is Transcription factor E (188 aa).

The 90-residue stretch at 9-98 folds into the HTH TFE/IIEalpha-type domain; the sequence is DLEVLRDVTL…SWRLNLREVL (90 aa).

This sequence belongs to the TFE family. Monomer. Interaction with RNA polymerase subunits RpoF and RpoE is necessary for Tfe stimulatory transcription activity. Able to interact with Tbp and RNA polymerase in the absence of DNA promoter. Interacts both with the preinitiation and elongation complexes.

Its function is as follows. Transcription factor that plays a role in the activation of archaeal genes transcribed by RNA polymerase. Facilitates transcription initiation by enhancing TATA-box recognition by TATA-box-binding protein (Tbp), and transcription factor B (Tfb) and RNA polymerase recruitment. Not absolutely required for transcription in vitro, but particularly important in cases where Tbp or Tfb function is not optimal. It dynamically alters the nucleic acid-binding properties of RNA polymerases by stabilizing the initiation complex and destabilizing elongation complexes. Seems to translocate with the RNA polymerase following initiation and acts by binding to the non template strand of the transcription bubble in elongation complexes. The sequence is that of Transcription factor E from Methanopyrus kandleri (strain AV19 / DSM 6324 / JCM 9639 / NBRC 100938).